A 532-amino-acid chain; its full sequence is Putative sodium-dependent excitatory amino acid transporter glt-3 (532 aa).

Topologically, residues 1–5 (MGMKK) are cytoplasmic. A run of 3 helical transmembrane segments spans residues 6–26 (DLLLVLTIESVVLGVVLGFVI), 46–66 (FMQIVEMMILPLIMSSVISAL), and 83–103 (IYYMITTFLATFTGIILVSSI). The Extracellular portion of the chain corresponds to 104-181 (HPGDPELIHE…SEVLHKQTLT (78 aa)). Asn-164 and Asn-169 each carry an N-linked (GlcNAc...) asparagine glycan. 5 helical membrane-spanning segments follow: residues 182 to 202 (YTNEMNVLGLIVFCSGFGIIL), 222 to 242 (IIMRWISALMWCYPIGILSLV), 264 to 284 (VTVICGLMIHSLLTLPLLYFL), 352 to 372 (AVAVIFIAQLHNIKLSLMDLV), and 383 to 402 (IGSGSVPAGLDTIVIVLTTV).

Belongs to the dicarboxylate/amino acid:cation symporter (DAACS) (TC 2.A.23) family.

It is found in the membrane. This Caenorhabditis elegans protein is Putative sodium-dependent excitatory amino acid transporter glt-3 (glt-3).